The chain runs to 439 residues: Guanine deaminase (439 aa).

Positions 82 and 84 each coordinate Zn(2+). Substrate-binding positions include 84 to 87 (HYPQ), 209 to 210 (RF), 237 to 240 (HLCE), and Asp-327. Residues His-237 and Asp-327 each coordinate Zn(2+).

Belongs to the metallo-dependent hydrolases superfamily. ATZ/TRZ family. Zn(2+) is required as a cofactor.

The catalysed reaction is guanine + H2O + H(+) = xanthine + NH4(+). It functions in the pathway purine metabolism; guanine degradation; xanthine from guanine: step 1/1. Functionally, catalyzes the hydrolytic deamination of guanine, producing xanthine and ammonia. In Escherichia coli (strain K12), this protein is Guanine deaminase (guaD).